Consider the following 718-residue polypeptide: Polyribonucleotide nucleotidyltransferase (718 aa).

Residues Asp-487 and Asp-493 each contribute to the Mg(2+) site. The 60-residue stretch at 554-613 folds into the KH domain; sequence PRIETFKIPTDKIREVIGTGGKVIREIVEKTGAKVNIEDDGTVKVASSDGESIKAAIKWI. The S1 motif domain occupies 623–691; that stretch reads GEIYEGTVVK…DRGKTRLSMK (69 aa). The disordered stretch occupies residues 692–718; that stretch reads VVDQETGEDLEAKQKAEGDAPREAAGE. Over residues 701 to 718 the composition is skewed to basic and acidic residues; sequence LEAKQKAEGDAPREAAGE.

The protein belongs to the polyribonucleotide nucleotidyltransferase family. Mg(2+) is required as a cofactor.

It is found in the cytoplasm. The enzyme catalyses RNA(n+1) + phosphate = RNA(n) + a ribonucleoside 5'-diphosphate. In terms of biological role, involved in mRNA degradation. Catalyzes the phosphorolysis of single-stranded polyribonucleotides processively in the 3'- to 5'-direction. The polypeptide is Polyribonucleotide nucleotidyltransferase (Nitrobacter winogradskyi (strain ATCC 25391 / DSM 10237 / CIP 104748 / NCIMB 11846 / Nb-255)).